Reading from the N-terminus, the 216-residue chain is MALSEAAQKVQAALLERGLETPMVPCGLSREERKDKIEQHMRAILGLMSLDLTDDSLADTPRRIAKMYVDEIFSGLDYENFPKITVIDNKMGVDEMVRVQDISLTSTCEHHLVTIDGTATVAYLPRKKIIGLSKINRIVRFFAQRPQVQERLTQQVLVALQALLETKDVAVKIDAVHYCVKSRGVMDATSSTTTTALGGIFKSNPATRAEFLHQPR.

Zn(2+)-binding residues include C108, H111, and C179.

This sequence belongs to the GTP cyclohydrolase I family. In terms of assembly, toroid-shaped homodecamer, composed of two pentamers of five dimers.

The catalysed reaction is GTP + H2O = 7,8-dihydroneopterin 3'-triphosphate + formate + H(+). It functions in the pathway cofactor biosynthesis; 7,8-dihydroneopterin triphosphate biosynthesis; 7,8-dihydroneopterin triphosphate from GTP: step 1/1. This chain is GTP cyclohydrolase 1, found in Shewanella amazonensis (strain ATCC BAA-1098 / SB2B).